We begin with the raw amino-acid sequence, 429 residues long: Ribosomal RNA small subunit methyltransferase B (429 aa).

S-adenosyl-L-methionine is bound by residues 254–260 (CAAPGGK), aspartate 277, aspartate 303, and aspartate 322. Cysteine 375 acts as the Nucleophile in catalysis. Residues 397 to 419 (ALSETGTPDQPGQQNLPGGEEGD) are disordered. Polar residues predominate over residues 400–412 (ETGTPDQPGQQNL).

This sequence belongs to the class I-like SAM-binding methyltransferase superfamily. RsmB/NOP family.

Its subcellular location is the cytoplasm. It carries out the reaction cytidine(967) in 16S rRNA + S-adenosyl-L-methionine = 5-methylcytidine(967) in 16S rRNA + S-adenosyl-L-homocysteine + H(+). In terms of biological role, specifically methylates the cytosine at position 967 (m5C967) of 16S rRNA. The chain is Ribosomal RNA small subunit methyltransferase B from Salmonella paratyphi A (strain ATCC 9150 / SARB42).